The chain runs to 635 residues: RING finger protein 207 (635 aa).

The segment at 25 to 64 adopts an RING-type zinc-finger fold; sequence CPLCHGQYERPCLLDCFHDFCTGCLRGRATDGRLSCPLCQ. The B box-type; atypical zinc finger occupies 93-145; sequence SEAVRCANCDLECSQQDAETTYFCNTCGQPLCARCREETHRARMFARHDIVAL. Positions 98, 101, 127, and 132 each coordinate Zn(2+). The stretch at 422–460 forms a coiled coil; it reads EHCRHYEDSYRGLQVEVQNLKDQVQELHRDLTKHHSLIK. Residues 553–562 show a composition bias toward basic and acidic residues; sequence QVPVDEHAEH. The disordered stretch occupies residues 553 to 635; it reads QVPVDEHAEH…SGSKGACYQA (83 aa). The segment covering 589–598 has biased composition (polar residues); that stretch reads PNGSSWSLSS. The segment covering 607 to 622 has biased composition (basic and acidic residues); it reads NQDHLRPKLEAGDEGW.

As to quaternary structure, interacts with the core-glycosylated, but not the fully glycosylated form of KCNH2/HERG. Interacts with DNAJA1 and HSPA8. Interacts (via the C-terminus) with HSPA1A; this interaction additively increases KCNH2 expression.

The protein resides in the cytoplasm. Functionally, plays a role in cardiac repolarization possibly by stabilizing membrane expression of the potassium channel KCNH2/HERG, or by assisting its synthesis, folding or export from the endoplasmic reticulum, in a heat shock protein-dependent manner. This is RING finger protein 207 (Rnf207) from Mus musculus (Mouse).